Here is a 184-residue protein sequence, read N- to C-terminus: Lactoylglutathione lyase (184 aa).

The residue at position 2 (Ala-2) is an N-acetylalanine. Cys-19 and Cys-20 are disulfide-bonded. One can recognise a VOC domain in the interval 31–177; sequence LLQQTMLRIK…DGYWIEILNP (147 aa). Residues Gln-34 and Arg-38 each coordinate substrate. Gln-34 is a binding site for Zn(2+). Glu-100 serves as a coordination point for Zn(2+). Asn-104 contributes to the substrate binding site. Position 107 is a phosphothreonine (Thr-107). Residues Arg-123 and His-127 each contribute to the substrate site. Residue His-127 coordinates Zn(2+). Cys-139 is modified (S-glutathionyl cysteine). The residue at position 148 (Lys-148) is an N6-acetyllysine; alternate. Lys-148 carries the post-translational modification N6-succinyllysine; alternate. A substrate-binding site is contributed by 157 to 158; the sequence is KM. Glu-173 is a binding site for Zn(2+). Glu-173 (proton donor/acceptor) is an active-site residue.

This sequence belongs to the glyoxalase I family. Homodimer. Zn(2+) serves as cofactor. In terms of processing, glutathionylation at Cys-139 inhibits enzyme activity. Phosphorylated at Thr-107 in the presence of CaMK2. However, this is a consensus site for phosphorylation by CK2 so phosphorylation may be mediated by CK2 rather than CaMK2. Phosphorylation is induced by TNF and suppresses the TNF-induced transcriptional activity of NF-kappa-B. Post-translationally, exists in a nitric oxide (NO)-modified form. The exact nature of the modification is unknown, but it suppresses the TNF-induced transcriptional activity of NF-kappa-B.

It catalyses the reaction (R)-S-lactoylglutathione = methylglyoxal + glutathione. It participates in secondary metabolite metabolism; methylglyoxal degradation; (R)-lactate from methylglyoxal: step 1/2. Its function is as follows. Catalyzes the conversion of hemimercaptal, formed from methylglyoxal and glutathione, to S-lactoylglutathione. Involved in the regulation of TNF-induced transcriptional activity of NF-kappa-B. Required for normal osteoclastogenesis. In Rattus norvegicus (Rat), this protein is Lactoylglutathione lyase (Glo1).